Reading from the N-terminus, the 37-residue chain is Large ribosomal subunit protein bL36 (37 aa).

It belongs to the bacterial ribosomal protein bL36 family.

This Geobacillus kaustophilus (strain HTA426) protein is Large ribosomal subunit protein bL36.